We begin with the raw amino-acid sequence, 88 residues long: Small ribosomal subunit protein bS20 (88 aa).

A disordered region spans residues 1-26; sequence MANTAQARKRARQNTKRRQNSASQRS. Over residues 7-19 the composition is skewed to basic residues; that stretch reads ARKRARQNTKRRQ.

This sequence belongs to the bacterial ribosomal protein bS20 family.

In terms of biological role, binds directly to 16S ribosomal RNA. This Psychrobacter cryohalolentis (strain ATCC BAA-1226 / DSM 17306 / VKM B-2378 / K5) protein is Small ribosomal subunit protein bS20.